A 261-amino-acid chain; its full sequence is Ubiquinone biosynthesis O-methyltransferase (261 aa).

Positions 1–22 (MTMQVDPSANSSAASSAAPGTT) are disordered. The span at 8–18 (SANSSAASSAA) shows a compositional bias: low complexity. S-adenosyl-L-methionine contacts are provided by Arg55, Gly86, Asp107, and Met149.

Belongs to the methyltransferase superfamily. UbiG/COQ3 family.

It catalyses the reaction a 3-demethylubiquinol + S-adenosyl-L-methionine = a ubiquinol + S-adenosyl-L-homocysteine + H(+). The catalysed reaction is a 3-(all-trans-polyprenyl)benzene-1,2-diol + S-adenosyl-L-methionine = a 2-methoxy-6-(all-trans-polyprenyl)phenol + S-adenosyl-L-homocysteine + H(+). It functions in the pathway cofactor biosynthesis; ubiquinone biosynthesis. O-methyltransferase that catalyzes the 2 O-methylation steps in the ubiquinone biosynthetic pathway. The sequence is that of Ubiquinone biosynthesis O-methyltransferase from Nitrobacter winogradskyi (strain ATCC 25391 / DSM 10237 / CIP 104748 / NCIMB 11846 / Nb-255).